The sequence spans 736 residues: Subtilisin-like protease SBT4.6 (736 aa).

A signal peptide spans 1–24 (MATAVSYCLLSCIFALLVVSFASA). The propeptide at 25 to 111 (GKDDQDKQVY…VFPSKNLNLQ (87 aa)) is activation peptide. The Inhibitor I9 domain occupies 33-110 (VYIVYMGALP…SVFPSKNLNL (78 aa)). The region spanning 115-589 (SWNFMGLKEG…AGHVDPIAAI (475 aa)) is the Peptidase S8 domain. The active-site Charge relay system is the Asp143. N-linked (GlcNAc...) asparagine glycosylation occurs at Asn174. Residue His204 is the Charge relay system of the active site. A glycan (N-linked (GlcNAc...) asparagine) is linked at Asn227. In terms of domain architecture, PA spans 362 to 442 (KYPLVYGKSA…PVSVLSEDDY (81 aa)). N-linked (GlcNAc...) asparagine glycosylation is present at Asn450. Catalysis depends on Ser527, which acts as the Charge relay system. Residues Asn564, Asn598, Asn610, and Asn668 are each glycosylated (N-linked (GlcNAc...) asparagine).

It belongs to the peptidase S8 family. In terms of processing, the C-terminal propeptide is autocleaved.

Its subcellular location is the secreted. The protein is Subtilisin-like protease SBT4.6 of Arabidopsis thaliana (Mouse-ear cress).